The chain runs to 717 residues: Ribosomal RNA large subunit methyltransferase K/L (717 aa).

Residues 44 to 155 (DAYKVCIYSY…KQFVNVFLCL (112 aa)) enclose the THUMP domain.

The protein belongs to the methyltransferase superfamily. RlmKL family.

Its subcellular location is the cytoplasm. It catalyses the reaction guanosine(2445) in 23S rRNA + S-adenosyl-L-methionine = N(2)-methylguanosine(2445) in 23S rRNA + S-adenosyl-L-homocysteine + H(+). The catalysed reaction is guanosine(2069) in 23S rRNA + S-adenosyl-L-methionine = N(2)-methylguanosine(2069) in 23S rRNA + S-adenosyl-L-homocysteine + H(+). Specifically methylates the guanine in position 2445 (m2G2445) and the guanine in position 2069 (m7G2069) of 23S rRNA. In Francisella tularensis subsp. tularensis (strain SCHU S4 / Schu 4), this protein is Ribosomal RNA large subunit methyltransferase K/L.